Reading from the N-terminus, the 466-residue chain is 3-isopropylmalate dehydratase large subunit (466 aa).

Cys347, Cys407, and Cys410 together coordinate [4Fe-4S] cluster.

Belongs to the aconitase/IPM isomerase family. LeuC type 1 subfamily. Heterodimer of LeuC and LeuD. [4Fe-4S] cluster is required as a cofactor.

It catalyses the reaction (2R,3S)-3-isopropylmalate = (2S)-2-isopropylmalate. The protein operates within amino-acid biosynthesis; L-leucine biosynthesis; L-leucine from 3-methyl-2-oxobutanoate: step 2/4. Its function is as follows. Catalyzes the isomerization between 2-isopropylmalate and 3-isopropylmalate, via the formation of 2-isopropylmaleate. The protein is 3-isopropylmalate dehydratase large subunit of Klebsiella pneumoniae (strain 342).